The chain runs to 289 residues: MEFVQNWDGYAVRDWMIRNVDVVGYISGIYLAFVFTGPKLFAKITGRDGATSVAPARQGGAGGGGSKAVRRAMVLWNLSLSVFSIFGTSTVTPTLVRNIMNKGFYEATCTFNDKEFYTTDVGFWIGVFALSKIPELMDTIFLVLQGKSTLPFLHWYHHVTVLLFSWHTYCVGSSGYIWVAAMNYSVHSIMYLYFAIAEMGYKHVVRPWAPYITILQILQMVMGCFVTLYAMQESHDGRGCGMTWSNMRIQLLMYASYLYLFSEMFVKAHVLPRWAPVATHANGSLKKSS.

7 helical membrane-spanning segments follow: residues 22–42, 72–92, 123–143, 152–172, 177–197, 208–228, and 251–271; these read VVGY…KLFA, AMVL…STVT, FWIG…IFLV, FLHW…YCVG, IWVA…FAIA, WAPY…FVTL, and LLMY…AHVL. The HxxHH motif motif lies at 154-158; it reads HWYHH. The active-site Nucleophile is the H157. A glycan (N-linked (GlcNAc...) asparagine) is linked at N282.

The protein belongs to the ELO family.

It localises to the endoplasmic reticulum membrane. The enzyme catalyses an acyl-CoA + malonyl-CoA + H(+) = a 3-oxoacyl-CoA + CO2 + CoA. It functions in the pathway lipid metabolism; fatty acid biosynthesis. Functionally, involved in the synthesis of fatty acids. Elongates C4 fatty acids. Required for the normal mitochondrial function, energy metabolism and growth of epimastigotes. This is Fatty acid elongase 1 from Trypanosoma cruzi (strain CL Brener).